The primary structure comprises 268 residues: Protein atz-1 (268 aa).

A coiled-coil region spans residues 171–243 (VDDANKLTEV…EEGEEDYEEE (73 aa)). Positions 229–268 (DLMKEEEGEEDYEEEENYEVEEDFEDEEEYDEEGEEEDYE) are disordered. The segment covering 231 to 268 (MKEEEGEEDYEEEENYEVEEDFEDEEEYDEEGEEEDYE) has biased composition (acidic residues).

The protein resides in the nucleus. Plays a role in meiosis, germline development and oocyte morphogenesis. May play a role in DNA replication. In the germline, involved in the maintenance of transition zone nuclei and in chromosome structure and organization, but not required for mitotic proliferation. In Caenorhabditis elegans, this protein is Protein atz-1.